Consider the following 134-residue polypeptide: ATP synthase epsilon chain, chloroplastic (134 aa).

Belongs to the ATPase epsilon chain family. As to quaternary structure, F-type ATPases have 2 components, CF(1) - the catalytic core - and CF(0) - the membrane proton channel. CF(1) has five subunits: alpha(3), beta(3), gamma(1), delta(1), epsilon(1). CF(0) has three main subunits: a, b and c.

The protein resides in the plastid. It is found in the chloroplast thylakoid membrane. Functionally, produces ATP from ADP in the presence of a proton gradient across the membrane. The polypeptide is ATP synthase epsilon chain, chloroplastic (Phalaenopsis aphrodite subsp. formosana (Moth orchid)).